Reading from the N-terminus, the 364-residue chain is 3-isopropylmalate dehydrogenase (364 aa).

79 to 90 provides a ligand contact to NAD(+); the sequence is GPKWGTGSVRPE. Arg97, Arg107, Arg136, and Asp225 together coordinate substrate. 3 residues coordinate Mg(2+): Asp225, Asp250, and Asp254. 289 to 300 serves as a coordination point for NAD(+); that stretch reads GSAPDLPKNKVN.

It belongs to the isocitrate and isopropylmalate dehydrogenases family. In terms of assembly, homodimer. Mg(2+) serves as cofactor. The cofactor is Mn(2+).

It localises to the cytoplasm. It carries out the reaction (2R,3S)-3-isopropylmalate + NAD(+) = 4-methyl-2-oxopentanoate + CO2 + NADH. The protein operates within amino-acid biosynthesis; L-leucine biosynthesis; L-leucine from 3-methyl-2-oxobutanoate: step 3/4. Catalyzes the oxidation of 3-carboxy-2-hydroxy-4-methylpentanoate (3-isopropylmalate) to 3-carboxy-4-methyl-2-oxopentanoate. The product decarboxylates to 4-methyl-2 oxopentanoate. The chain is 3-isopropylmalate dehydrogenase (LEU2) from Saccharomyces cerevisiae (strain ATCC 204508 / S288c) (Baker's yeast).